The chain runs to 287 residues: Glutamate racemase (287 aa).

A compositionally biased stretch (polar residues) spans 1–15 (MATKPQDANTTSREA). The disordered stretch occupies residues 1-25 (MATKPQDANTTSREAITSKADSPPR). Residues 32 to 33 (DS) and 64 to 65 (YG) each bind substrate. Cys96 acts as the Proton donor/acceptor in catalysis. Residue 97 to 98 (NT) coordinates substrate. Cys208 serves as the catalytic Proton donor/acceptor. 209 to 210 (TH) is a substrate binding site.

This sequence belongs to the aspartate/glutamate racemases family.

It catalyses the reaction L-glutamate = D-glutamate. Its pathway is cell wall biogenesis; peptidoglycan biosynthesis. Functionally, provides the (R)-glutamate required for cell wall biosynthesis. The chain is Glutamate racemase from Yersinia pseudotuberculosis serotype I (strain IP32953).